A 227-amino-acid polypeptide reads, in one-letter code: Adenosylcobinamide-GDP ribazoletransferase (227 aa).

The next 5 helical transmembrane spans lie at 3–23 (CLKAVVAFFTALPVGGAELDF), 26–46 (IWATPYLAGLMVGGAGGAVYF), 95–115 (GVGGIFAVVALFVLAASARPE), 117–137 (WLDYIVTDLYSKALALVVAAY), and 165–185 (AVAAWLHPAAFLAATVLSLFF).

The protein belongs to the CobS family. Requires Mg(2+) as cofactor.

It localises to the cell membrane. The enzyme catalyses alpha-ribazole + adenosylcob(III)inamide-GDP = adenosylcob(III)alamin + GMP + H(+). It carries out the reaction alpha-ribazole 5'-phosphate + adenosylcob(III)inamide-GDP = adenosylcob(III)alamin 5'-phosphate + GMP + H(+). It participates in cofactor biosynthesis; adenosylcobalamin biosynthesis; adenosylcobalamin from cob(II)yrinate a,c-diamide: step 7/7. Functionally, joins adenosylcobinamide-GDP and alpha-ribazole to generate adenosylcobalamin (Ado-cobalamin). Also synthesizes adenosylcobalamin 5'-phosphate from adenosylcobinamide-GDP and alpha-ribazole 5'-phosphate. The sequence is that of Adenosylcobinamide-GDP ribazoletransferase from Pyrobaculum islandicum (strain DSM 4184 / JCM 9189 / GEO3).